The primary structure comprises 105 residues: DNA-directed RNA polymerase subunit omega (105 aa).

This sequence belongs to the RNA polymerase subunit omega family. The RNAP catalytic core consists of 2 alpha, 1 beta, 1 beta' and 1 omega subunit. When a sigma factor is associated with the core the holoenzyme is formed, which can initiate transcription.

The catalysed reaction is RNA(n) + a ribonucleoside 5'-triphosphate = RNA(n+1) + diphosphate. Its function is as follows. Promotes RNA polymerase assembly. Latches the N- and C-terminal regions of the beta' subunit thereby facilitating its interaction with the beta and alpha subunits. This is DNA-directed RNA polymerase subunit omega from Streptococcus equi subsp. zooepidemicus (strain MGCS10565).